A 250-amino-acid chain; its full sequence is MSGHSKWSTIKFKKALKDAKRGKIFTRLIREITVAARAGGGDPASNSRLRLALDKAYGANMTKDTIERAIKRGTGELEGVDYEEVTYEGYGPGGVAILIETMTDNKVRTVAEVRHIFSKRGGNMGTAGSVAYQFKKLGLIVFPADADEDRILEAALEAGAEDVVNEGERIAVYTAPSDLHSVVLALEAAGLKPEESEMTMIPENTIEVSGEEAEKLLRLIDFLEENDDVQNVYANYDISDEEMARLEATS.

The protein belongs to the TACO1 family.

It localises to the cytoplasm. This chain is Probable transcriptional regulatory protein Lferr_0060, found in Acidithiobacillus ferrooxidans (strain ATCC 53993 / BNL-5-31) (Leptospirillum ferrooxidans (ATCC 53993)).